Here is a 145-residue protein sequence, read N- to C-terminus: uncharacterized protein (145 aa).

The protein belongs to the SAP18 family.

The protein localises to the cytoplasm. It is found in the nucleus. This is an uncharacterized protein from Schizosaccharomyces pombe (strain 972 / ATCC 24843) (Fission yeast).